The sequence spans 417 residues: Methyltransferase/ribosomally synthesized cyclic peptide lentinulin A precursor ledMA (417 aa).

Positions 1 to 251 (METPTLNKSG…GVSTFYIPPK (251 aa)) are methyltransferase domain. Residues Arg-72, Tyr-76, and Tyr-98 contribute to the active site. Residues Tyr-98, His-100, Val-103, Ala-130, Gln-172, Ala-213, Ser-244, and Thr-245 each coordinate S-adenosyl-L-methionine. Residues 252–378 (ERKEINVDII…WAFRCAMKEM (127 aa)) are clasp domain. The segment at 379 to 399 (PISLLDNAKQSMEEASEQGFP) is precursor leader. An N-methylisoleucine modification is found at Ile-401. Residues Val-403 and Val-404 each carry the N-methylvaline modification. The residue at position 405 (Gly-405) is an N-methylglycine. N-methylvaline is present on residues Val-406 and Val-407. Residue Gly-408 is modified to N-methylglycine. At Val-410 the chain carries N-methylvaline. Gly-411 is modified (N-methylglycine). At Val-413 the chain carries N-methylvaline.

It in the N-terminal section; belongs to the precorrin methyltransferase family. As to quaternary structure, homodimer. Post-translationally, ledMA automethylates at Ile-401, Val-403, Val-404, Gly-405, Val-406, Val-407, Gly-408, Val-410, Gly-411 and Val-413 before being processed by the prolyloligopeptidase ledP which likely forms a peptidyl ester upon removal of the follower propeptide, which then undergoes macrocyclization with the N-terminus of the modified core peptide. Peptide backbone alpha-N-methylations change the physicochemical properties of amide bonds to provide structural constraints and other favorable characteristics including biological membrane permeability to peptides.

Its pathway is mycotoxin biosynthesis. Its function is as follows. Fusion protein of the methyltransferase ledM and the lentinulin A core peptide; part of the gene cluster that mediates the biosynthesis of lentinulin A, a highly methylated cyclic dodecapeptide with nematodicidal activity. Lentinulin A derives from the C-terminus of the ledMA protein, and it is the ledMA protein that methylates its own C-terminus using S-adenosyl methionine (SAM). The C-terminus is subsequently cleaved off and macrocyclized by the prolyloligopeptidase ledP to give the final product. This Lentinula edodes (Shiitake mushroom) protein is Methyltransferase/ribosomally synthesized cyclic peptide lentinulin A precursor ledMA.